Reading from the N-terminus, the 177-residue chain is Ribosome maturation factor RimM (177 aa).

In terms of domain architecture, PRC barrel spans 104–176 (DGEYYFFEIL…KIIVNMPEWL (73 aa)).

This sequence belongs to the RimM family. As to quaternary structure, binds ribosomal protein uS19.

The protein resides in the cytoplasm. Its function is as follows. An accessory protein needed during the final step in the assembly of 30S ribosomal subunit, possibly for assembly of the head region. Essential for efficient processing of 16S rRNA. May be needed both before and after RbfA during the maturation of 16S rRNA. It has affinity for free ribosomal 30S subunits but not for 70S ribosomes. The protein is Ribosome maturation factor RimM of Fervidobacterium nodosum (strain ATCC 35602 / DSM 5306 / Rt17-B1).